Consider the following 811-residue polypeptide: Probable inorganic carbon transporter subunit DabA (811 aa).

Zn(2+) is bound by residues cysteine 336, aspartate 338, histidine 498, and cysteine 513.

The protein belongs to the inorganic carbon transporter (TC 9.A.2) DabA family. In terms of assembly, forms a complex with DabB. It depends on Zn(2+) as a cofactor.

The protein resides in the cell inner membrane. In terms of biological role, part of an energy-coupled inorganic carbon pump. The chain is Probable inorganic carbon transporter subunit DabA from Rhodospirillum centenum (strain ATCC 51521 / SW).